Consider the following 262-residue polypeptide: ATP synthase subunit delta (262 aa).

It belongs to the ATPase delta chain family. As to quaternary structure, F-type ATPases have 2 components, F(1) - the catalytic core - and F(0) - the membrane proton channel. F(1) has five subunits: alpha(3), beta(3), gamma(1), delta(1), epsilon(1). F(0) has three main subunits: a(1), b(2) and c(10-14). The alpha and beta chains form an alternating ring which encloses part of the gamma chain. F(1) is attached to F(0) by a central stalk formed by the gamma and epsilon chains, while a peripheral stalk is formed by the delta and b chains.

It is found in the cell membrane. F(1)F(0) ATP synthase produces ATP from ADP in the presence of a proton or sodium gradient. F-type ATPases consist of two structural domains, F(1) containing the extramembraneous catalytic core and F(0) containing the membrane proton channel, linked together by a central stalk and a peripheral stalk. During catalysis, ATP synthesis in the catalytic domain of F(1) is coupled via a rotary mechanism of the central stalk subunits to proton translocation. In terms of biological role, this protein is part of the stalk that links CF(0) to CF(1). It either transmits conformational changes from CF(0) to CF(1) or is implicated in proton conduction. This chain is ATP synthase subunit delta, found in Tropheryma whipplei (strain TW08/27) (Whipple's bacillus).